The primary structure comprises 230 residues: Heptaprenylglyceryl phosphate synthase (230 aa).

Lys12 lines the sn-glycerol 1-phosphate pocket. Mg(2+) is bound by residues Asp14 and Thr40. Residues 159-164, Gly189, and 209-210 contribute to the sn-glycerol 1-phosphate site; these read YIEYSG and GD.

The protein belongs to the GGGP/HepGP synthase family. Group I subfamily. As to quaternary structure, homodimer. It depends on Mg(2+) as a cofactor.

It carries out the reaction sn-glycerol 1-phosphate + all-trans-heptaprenyl diphosphate = 3-heptaprenyl-sn-glycero-1-phosphate + diphosphate. Its pathway is membrane lipid metabolism; glycerophospholipid metabolism. Its function is as follows. Prenyltransferase that catalyzes in vivo the transfer of the heptaprenyl moiety of heptaprenyl pyrophosphate (HepPP; 35 carbon atoms) to the C3 hydroxyl of sn-glycerol-1-phosphate (G1P), producing heptaprenylglyceryl phosphate (HepGP). This reaction is an ether-bond-formation step in the biosynthesis of archaea-type G1P-based membrane lipids found in Bacillales. In Staphylococcus aureus (strain JH1), this protein is Heptaprenylglyceryl phosphate synthase.